The following is a 275-amino-acid chain: Phosphonoacetaldehyde hydrolase (275 aa).

The Nucleophile role is filled by aspartate 15. 2 residues coordinate Mg(2+): aspartate 15 and alanine 17. Residue lysine 56 is the Schiff-base intermediate with substrate of the active site. Aspartate 189 provides a ligand contact to Mg(2+).

This sequence belongs to the HAD-like hydrolase superfamily. PhnX family. Homodimer. It depends on Mg(2+) as a cofactor.

It carries out the reaction phosphonoacetaldehyde + H2O = acetaldehyde + phosphate + H(+). Its activity is regulated as follows. Inhibited by phosphite, moderately inhibited by phosphonic acids, the corresponding aminophosphonic acids activate the enzyme. Its function is as follows. Involved in phosphonate degradation. The protein is Phosphonoacetaldehyde hydrolase of Pseudomonas aeruginosa (strain ATCC 15692 / DSM 22644 / CIP 104116 / JCM 14847 / LMG 12228 / 1C / PRS 101 / PAO1).